A 344-amino-acid chain; its full sequence is tRNA N6-adenosine threonylcarbamoyltransferase (344 aa).

His110 and His114 together coordinate Fe cation. Residues 133–137, Asp166, Gly179, and Asn278 contribute to the substrate site; that span reads VVSGA. Asp303 is a Fe cation binding site.

Belongs to the KAE1 / TsaD family. Fe(2+) serves as cofactor.

The protein localises to the cytoplasm. It carries out the reaction L-threonylcarbamoyladenylate + adenosine(37) in tRNA = N(6)-L-threonylcarbamoyladenosine(37) in tRNA + AMP + H(+). Required for the formation of a threonylcarbamoyl group on adenosine at position 37 (t(6)A37) in tRNAs that read codons beginning with adenine. Is involved in the transfer of the threonylcarbamoyl moiety of threonylcarbamoyl-AMP (TC-AMP) to the N6 group of A37, together with TsaE and TsaB. TsaD likely plays a direct catalytic role in this reaction. The sequence is that of tRNA N6-adenosine threonylcarbamoyltransferase from Chlamydia pneumoniae (Chlamydophila pneumoniae).